The sequence spans 372 residues: Putative aminopeptidase SgcX (372 aa).

Positions 67 and 180 each coordinate a divalent metal cation. Glu-212 (proton acceptor) is an active-site residue. The a divalent metal cation site is built by Glu-213, Asp-235, and His-329.

This sequence belongs to the peptidase M42 family. Requires a divalent metal cation as cofactor.

This is Putative aminopeptidase SgcX (sgcX) from Salmonella typhi.